Reading from the N-terminus, the 159-residue chain is uncharacterized protein (159 aa).

This is an uncharacterized protein from Caenorhabditis elegans.